The primary structure comprises 262 residues: Type III pantothenate kinase (262 aa).

6-13 contributes to the ATP binding site; that stretch reads DVGNTNAV. Substrate contacts are provided by residues tyrosine 100 and 107–110; that span reads GADR. Aspartate 109 (proton acceptor) is an active-site residue. Aspartate 129 is a binding site for K(+). ATP is bound at residue threonine 132. Residue threonine 184 coordinates substrate.

This sequence belongs to the type III pantothenate kinase family. Homodimer. The cofactor is NH4(+). K(+) is required as a cofactor.

Its subcellular location is the cytoplasm. It carries out the reaction (R)-pantothenate + ATP = (R)-4'-phosphopantothenate + ADP + H(+). The protein operates within cofactor biosynthesis; coenzyme A biosynthesis; CoA from (R)-pantothenate: step 1/5. Functionally, catalyzes the phosphorylation of pantothenate (Pan), the first step in CoA biosynthesis. This is Type III pantothenate kinase from Bacillus anthracis (strain A0248).